Consider the following 640-residue polypeptide: Tyrosine--tRNA ligase, mitochondrial (640 aa).

Position 100 (Y100) interacts with L-tyrosine. An ATP-binding site is contributed by D104. Positions 105 to 114 match the 'HIGH' region motif; it reads PTAPSLHIGH. L-tyrosine is bound by residues D144, Y248, Q252, D255, and Q274. A 'KMSKS' region motif is present at residues 322-326; it reads KFGKS. Position 325 (K325) interacts with ATP.

Belongs to the class-I aminoacyl-tRNA synthetase family.

Its subcellular location is the mitochondrion matrix. The enzyme catalyses tRNA(Tyr) + L-tyrosine + ATP = L-tyrosyl-tRNA(Tyr) + AMP + diphosphate + H(+). Has both an aminoacyl-tRNA synthetase activity and is involved in the splicing of group I introns. The sequence is that of Tyrosine--tRNA ligase, mitochondrial (YTS1) from Podospora anserina (Pleurage anserina).